A 561-amino-acid polypeptide reads, in one-letter code: Inner membrane ABC transporter ATP-binding protein YddA (561 aa).

The Cytoplasmic portion of the chain corresponds to 1–3 (MIT). The helical transmembrane segment at 4–24 (IPITLRMLIAKYLCLLKPFWL) threads the bilayer. The Periplasmic portion of the chain corresponds to 25–31 (RKNNKTS). Residues 32–52 (VLLIIIILAMILGVVKIQVWL) traverse the membrane as a helical segment. Residues 35-337 (IIIILAMILG…FIYKYDELAE (303 aa)) form the ABC transmembrane type-1 domain. Residues 53–70 (NDWNNDFFNALSQKETDK) are Cytoplasmic-facing. The helical transmembrane segment at 71 to 91 (LWQLVLWFPALLGIFVLISVN) threads the bilayer. The Periplasmic portion of the chain corresponds to 92 to 151 (KTWLIKLLTIRWREWLTDYYLNRWFADKNYYFTQIYGEHKNTDNPDQRIAEDILLLISKT). Residues 152 to 172 (LSLSFGFIQSLSMLITFTVIL) form a helical membrane-spanning segment. Topologically, residues 173 to 187 (WESAGTLSFTVGGTE) are cytoplasmic. The chain crosses the membrane as a helical span at residues 188 to 208 (WNIQGYMVYTVVLIVIGGTLF). Residues 209–290 (THKVGKRIRP…WQNIYSRSLS (82 aa)) are Periplasmic-facing. The chain crosses the membrane as a helical span at residues 291–311 (VLPYFLLLPQFISGQINLGGL). The Cytoplasmic portion of the chain corresponds to 312–561 (MKSRQAFMLV…DDICDISAVL (250 aa)). In terms of domain architecture, ABC transporter spans 367–561 (VQVADASIRT…DDICDISAVL (195 aa)). 400–407 (GYSGAGKT) is an ATP binding site.

It belongs to the ABC transporter superfamily.

The protein localises to the cell inner membrane. This chain is Inner membrane ABC transporter ATP-binding protein YddA (yddA), found in Escherichia coli (strain K12).